The following is a 212-amino-acid chain: Urease accessory protein UreG 2 (212 aa).

11–18 (GPVGSGKT) is a binding site for GTP.

It belongs to the SIMIBI class G3E GTPase family. UreG subfamily. In terms of assembly, homodimer. UreD, UreF and UreG form a complex that acts as a GTP-hydrolysis-dependent molecular chaperone, activating the urease apoprotein by helping to assemble the nickel containing metallocenter of UreC. The UreE protein probably delivers the nickel.

It is found in the cytoplasm. Functionally, facilitates the functional incorporation of the urease nickel metallocenter. This process requires GTP hydrolysis, probably effectuated by UreG. The protein is Urease accessory protein UreG 2 of Brucella abortus (strain 2308).